Consider the following 716-residue polypeptide: Probable extracellular serine carboxypeptidase (716 aa).

The N-terminal stretch at 1–17 is a signal peptide; the sequence is MVKLTACLLLLVAAVQA. 2 N-linked (GlcNAc...) asparagine glycosylation sites follow: Asn143 and Asn174. The active-site Charge relay system is the Ser188. Asn258 and Asn354 each carry an N-linked (GlcNAc...) asparagine glycan. The active-site Charge relay system is the Asp466. N-linked (GlcNAc...) asparagine glycans are attached at residues Asn507 and Asn550. Positions 617–636 are disordered; it reads RDLAAQPSKSKKDRRGQQLS. A helical membrane pass occupies residues 652 to 672; the sequence is LGFVSFLVFAFSSFTFIPDIE.

This sequence belongs to the peptidase S28 family.

The protein localises to the membrane. The protein resides in the secreted. The sequence is that of Probable extracellular serine carboxypeptidase from Arthroderma benhamiae (strain ATCC MYA-4681 / CBS 112371) (Trichophyton mentagrophytes).